Reading from the N-terminus, the 283-residue chain is Cilia- and flagella-associated protein 77 (283 aa).

Positions D151–G170 are disordered.

It belongs to the CFAP77 family. As to quaternary structure, microtubule inner protein component of sperm flagellar doublet microtubules.

It is found in the cytoplasm. Its subcellular location is the cytoskeleton. The protein resides in the cilium axoneme. The protein localises to the flagellum axoneme. Its function is as follows. Microtubule inner protein (MIP) part of the dynein-decorated doublet microtubules (DMTs) in cilia axoneme, which is required for motile cilia beating. The sequence is that of Cilia- and flagella-associated protein 77 from Mus musculus (Mouse).